The primary structure comprises 293 residues: Acidic endochitinase (293 aa).

The N-terminal stretch at 1 to 22 (MEKCFNIIPSLLLISLLIKSSN) is a signal peptide. Residues 24–293 (AGIAVYWGQN…GYSNAIKGSV (270 aa)) enclose the GH18 domain. Disulfide bonds link cysteine 43–cysteine 90 and cysteine 73–cysteine 80. Residue glutamate 150 is the Proton donor of the active site. Residues cysteine 179 and cysteine 208 are joined by a disulfide bond.

Belongs to the glycosyl hydrolase 18 family. Chitinase class II subfamily.

The protein resides in the secreted. Its subcellular location is the extracellular space. It carries out the reaction Random endo-hydrolysis of N-acetyl-beta-D-glucosaminide (1-&gt;4)-beta-linkages in chitin and chitodextrins.. Its function is as follows. This protein functions as a defense against chitin containing fungal pathogens. This chain is Acidic endochitinase, found in Cicer arietinum (Chickpea).